A 332-amino-acid chain; its full sequence is DNA double-strand break repair nuclease NurA (332 aa).

Mn(2+) contacts are provided by aspartate 57 and aspartate 132.

Belongs to the NurA family. Mn(2+) serves as cofactor.

Involved in DNA double-strand break (DSB) repair. Probably acts with HerA to stimulate resection of the 5' strand and produce the long 3' single-strand that is required for RadA loading. Exhibits both single-stranded endonuclease activity and 5'-3' exonuclease activity on single-stranded and double-stranded DNA. This Sulfolobus acidocaldarius (strain ATCC 33909 / DSM 639 / JCM 8929 / NBRC 15157 / NCIMB 11770) protein is DNA double-strand break repair nuclease NurA.